Here is a 186-residue protein sequence, read N- to C-terminus: Adrenodoxin, mitochondrial (186 aa).

Residues 1–58 (MAVRLLRVASAALGDTAVRWQPLVGPRAGNRGPGGSIWLGLGGRAAAARTLSLSARAW) constitute a mitochondrion transit peptide. Position 61 is a phosphoserine (S61). K64 carries the post-translational modification N6-acetyllysine; alternate. Position 64 is an N6-succinyllysine; alternate (K64). One can recognise a 2Fe-2S ferredoxin-type domain in the interval 65–169 (ITVHFINRDG…NMTVRVPEAV (105 aa)). C104, C110, C113, and C150 together coordinate [2Fe-2S] cluster. An N6-succinyllysine modification is found at K156. S175 carries the phosphoserine modification.

The protein belongs to the adrenodoxin/putidaredoxin family. In terms of assembly, interacts with CYP11A1. [2Fe-2S] cluster is required as a cofactor.

The protein localises to the mitochondrion matrix. In terms of biological role, essential for the synthesis of various steroid hormones. Participates in the reduction of mitochondrial cytochrome P450 for steroidogenesis. Transfers electrons from adrenodoxin reductase to CYP11A1, a cytochrome P450 that catalyzes cholesterol side-chain cleavage. Does not form a ternary complex with adrenodoxin reductase and CYP11A1 but shuttles between the two enzymes to transfer electrons. This Sus scrofa (Pig) protein is Adrenodoxin, mitochondrial (FDX1).